Reading from the N-terminus, the 179-residue chain is Large ribosomal subunit protein uL6 (179 aa).

It belongs to the universal ribosomal protein uL6 family. Part of the 50S ribosomal subunit.

This protein binds to the 23S rRNA, and is important in its secondary structure. It is located near the subunit interface in the base of the L7/L12 stalk, and near the tRNA binding site of the peptidyltransferase center. The protein is Large ribosomal subunit protein uL6 of Chlorobium phaeovibrioides (strain DSM 265 / 1930) (Prosthecochloris vibrioformis (strain DSM 265)).